The chain runs to 218 residues: MSDIEIKGILGKKLGMTQIFDEENRVVPVTVVEAGPCVVTQVRSKETDGYEAVQIAFGEIDPRKVNKPAAGHFKKAGVTPRRHVAEIRVADASSYEVGQDVTVDIFNDVKFVDVTGTTKGKGYAGGMKRHGFAGQGAAHGNQAAHRRVGSIGQAATPGRVFKGKRMAGRMGNDRVTQQNLKLAKVDAESNLLLIKGAVPGVNGGLVVVKTAVKGGAHA.

The protein belongs to the universal ribosomal protein uL3 family. In terms of assembly, part of the 50S ribosomal subunit. Forms a cluster with proteins L14 and L19.

Its function is as follows. One of the primary rRNA binding proteins, it binds directly near the 3'-end of the 23S rRNA, where it nucleates assembly of the 50S subunit. The protein is Large ribosomal subunit protein uL3 of Corynebacterium jeikeium (strain K411).